Consider the following 750-residue polypeptide: (13E)-labda-7,13-dien-15-ol synthase (750 aa).

Residues aspartate 284, aspartate 286, aspartate 501, aspartate 505, asparagine 647, threonine 651, and glutamate 655 each contribute to the Mg(2+) site. Positions 284 to 287 (DIDD) match the DXDD motif motif. A DDXXD motif motif is present at residues 501-505 (DDLAD).

This sequence belongs to the terpene synthase family. It depends on Mg(2+) as a cofactor.

It carries out the reaction geranylgeranyl diphosphate + H2O = (13E)-labda-7,13-dien-15-ol + diphosphate. It participates in secondary metabolite biosynthesis; terpenoid biosynthesis. Its function is as follows. Bifunctional diterpene synthase that directly generates the endocyclic double bond, as well as the hydroxyl group: produces an endocyclic double bond isomer of copalyl diphosphate (CPP), and carries out subsequent replacement of the diphosphate by a hydroxyl group to form (13E)-labda-7,13-dien-15-ol. This is (13E)-labda-7,13-dien-15-ol synthase from Selaginella moellendorffii (Spikemoss).